The primary structure comprises 227 residues: Potassium/proton antiporter CemA (227 aa).

A run of 4 helical transmembrane segments spans residues 5-25 (SISL…SFTF), 112-132 (IICF…LILI), 143-163 (LSDT…IGFH), and 187-207 (IISG…KYWI).

It belongs to the CemA family.

The protein resides in the plastid. It localises to the chloroplast inner membrane. It carries out the reaction K(+)(in) + H(+)(out) = K(+)(out) + H(+)(in). In terms of biological role, contributes to K(+)/H(+) antiport activity by supporting proton efflux to control proton extrusion and homeostasis in chloroplasts in a light-dependent manner to modulate photosynthesis. Prevents excessive induction of non-photochemical quenching (NPQ) under continuous-light conditions. Indirectly promotes efficient inorganic carbon uptake into chloroplasts. This chain is Potassium/proton antiporter CemA, found in Phaseolus vulgaris (Kidney bean).